We begin with the raw amino-acid sequence, 296 residues long: Diaminopimelate epimerase (296 aa).

Residues Asn-11 and Asn-78 each contribute to the substrate site. Cys-87 acts as the Proton donor in catalysis. Substrate contacts are provided by residues 88-89 (GN), Asn-167, Asn-203, and 221-222 (ER). Catalysis depends on Cys-230, which acts as the Proton acceptor. 231–232 (GT) is a substrate binding site.

The protein belongs to the diaminopimelate epimerase family. As to quaternary structure, homodimer.

The protein resides in the cytoplasm. The enzyme catalyses (2S,6S)-2,6-diaminopimelate = meso-2,6-diaminopimelate. It participates in amino-acid biosynthesis; L-lysine biosynthesis via DAP pathway; DL-2,6-diaminopimelate from LL-2,6-diaminopimelate: step 1/1. Its function is as follows. Catalyzes the stereoinversion of LL-2,6-diaminopimelate (L,L-DAP) to meso-diaminopimelate (meso-DAP), a precursor of L-lysine and an essential component of the bacterial peptidoglycan. This chain is Diaminopimelate epimerase, found in Mycobacterium leprae (strain Br4923).